A 127-amino-acid polypeptide reads, in one-letter code: Fumarate reductase subunit C (127 aa).

Transmembrane regions (helical) follow at residues 30–50 (ATVLPLILFTLFLTVGLGSLV), 67–87 (VVIAINIVALLGSLLHAHTFF), and 107–127 (IIVLAQWAAVAFISLIVLIVV).

This sequence belongs to the FrdC family. Part of an enzyme complex containing four subunits: a flavoprotein (FrdA), an iron-sulfur protein (FrdB), and two hydrophobic anchor proteins (FrdC and FrdD).

It is found in the cell inner membrane. Its function is as follows. Anchors the catalytic components of the fumarate reductase complex to the cell membrane, binds quinones. The sequence is that of Fumarate reductase subunit C from Vibrio vulnificus (strain CMCP6).